Reading from the N-terminus, the 466-residue chain is Asparagine--tRNA ligase (466 aa).

This sequence belongs to the class-II aminoacyl-tRNA synthetase family. Homodimer.

The protein resides in the cytoplasm. The enzyme catalyses tRNA(Asn) + L-asparagine + ATP = L-asparaginyl-tRNA(Asn) + AMP + diphosphate + H(+). The sequence is that of Asparagine--tRNA ligase from Shewanella amazonensis (strain ATCC BAA-1098 / SB2B).